A 510-amino-acid polypeptide reads, in one-letter code: Light-independent protochlorophyllide reductase subunit B (510 aa).

Position 36 (aspartate 36) interacts with [4Fe-4S] cluster. The active-site Proton donor is aspartate 296. 431-432 (GM) is a binding site for substrate.

It belongs to the ChlB/BchB/BchZ family. Protochlorophyllide reductase is composed of three subunits; ChlL, ChlN and ChlB. Forms a heterotetramer of two ChlB and two ChlN subunits. Requires [4Fe-4S] cluster as cofactor.

Its subcellular location is the plastid. The protein localises to the chloroplast. The catalysed reaction is chlorophyllide a + oxidized 2[4Fe-4S]-[ferredoxin] + 2 ADP + 2 phosphate = protochlorophyllide a + reduced 2[4Fe-4S]-[ferredoxin] + 2 ATP + 2 H2O. It participates in porphyrin-containing compound metabolism; chlorophyll biosynthesis (light-independent). Functionally, component of the dark-operative protochlorophyllide reductase (DPOR) that uses Mg-ATP and reduced ferredoxin to reduce ring D of protochlorophyllide (Pchlide) to form chlorophyllide a (Chlide). This reaction is light-independent. The NB-protein (ChlN-ChlB) is the catalytic component of the complex. This Chlorokybus atmophyticus (Soil alga) protein is Light-independent protochlorophyllide reductase subunit B.